The chain runs to 931 residues: Protein phosphatase 1 regulatory subunit 37 homolog (931 aa).

A disordered region spans residues 20–71 (TAASSPASPIPPTSPSMFATPPHQQSHSSATSVRKKVCQEANSSADDPDSDA). Polar residues predominate over residues 41–51 (PHQQSHSSATS). 8 LRR repeats span residues 232-259 (AISL…LARA), 262-285 (SASL…VLIC), 290-314 (NTGI…IYQL), 323-346 (LLDL…LRNR), 351-374 (KSAL…SLAE), 379-407 (NTKI…LVSN), 409-430 (HLHR…ILAE), and 435-458 (NTAL…ALHS). Residues 519–533 (QDHVSEDTEKENKDA) show a composition bias toward basic and acidic residues. Disordered regions lie at residues 519–602 (QDHV…RHQR) and 780–807 (PDCT…IRQR). The segment covering 534–547 (DNDDKEPENEDGDT) has biased composition (acidic residues). A compositionally biased stretch (low complexity) spans 554 to 563 (SDASADQSDS). 2 stretches are compositionally biased toward basic and acidic residues: residues 564-584 (PADK…EKRP) and 790-807 (TTSR…IRQR).

It belongs to the PPP1R37 family.

This chain is Protein phosphatase 1 regulatory subunit 37 homolog, found in Caenorhabditis briggsae.